The sequence spans 157 residues: Transcription inhibitor protein Gfh1 (157 aa).

Residues 1 to 74 (MAREVKLTKA…LEDVLSRAVI (74 aa)) are a coiled coil.

This sequence belongs to the GreA/GreB family. As to quaternary structure, interacts with RNAP.

In terms of biological role, inhibits all catalytic activities of RNA polymerase (RNAP) by partially occluding its substrate-binding site and preventing NTP binding. This chain is Transcription inhibitor protein Gfh1 (gfh1), found in Thermus aquaticus.